The primary structure comprises 185 residues: MTQEILKDTQSRMKKSVQTLEADLTKIRTGRANVSLLDHIEVEYYGAMVPLSQAANVNVTDHRTLSIQIWERDMVAKIEKAIINSDLGLTPNTAGQNIHINLPPLTEERRKEMVKVVKNEGEQAKIAVRNIRRDANQSLSKLLTQKEISEDEQRKSEEEIQKITDHFVAEIDKVLMAKEKELMEL.

It belongs to the RRF family.

It is found in the cytoplasm. In terms of biological role, responsible for the release of ribosomes from messenger RNA at the termination of protein biosynthesis. May increase the efficiency of translation by recycling ribosomes from one round of translation to another. This chain is Ribosome-recycling factor, found in Dichelobacter nodosus (strain VCS1703A).